Reading from the N-terminus, the 394-residue chain is 1-deoxy-D-xylulose 5-phosphate reductoisomerase (394 aa).

The NADPH site is built by T12, G13, S14, I15, G38, and N126. K127 lines the 1-deoxy-D-xylulose 5-phosphate pocket. E128 serves as a coordination point for NADPH. D151 is a Mn(2+) binding site. 1-deoxy-D-xylulose 5-phosphate contacts are provided by S152, E153, S177, and H200. E153 contributes to the Mn(2+) binding site. NADPH is bound at residue G206. 1-deoxy-D-xylulose 5-phosphate contacts are provided by S213, N218, K219, and E222. E222 contributes to the Mn(2+) binding site.

It belongs to the DXR family. The cofactor is Mg(2+). Mn(2+) serves as cofactor.

The catalysed reaction is 2-C-methyl-D-erythritol 4-phosphate + NADP(+) = 1-deoxy-D-xylulose 5-phosphate + NADPH + H(+). The protein operates within isoprenoid biosynthesis; isopentenyl diphosphate biosynthesis via DXP pathway; isopentenyl diphosphate from 1-deoxy-D-xylulose 5-phosphate: step 1/6. Its function is as follows. Catalyzes the NADPH-dependent rearrangement and reduction of 1-deoxy-D-xylulose-5-phosphate (DXP) to 2-C-methyl-D-erythritol 4-phosphate (MEP). This is 1-deoxy-D-xylulose 5-phosphate reductoisomerase from Beutenbergia cavernae (strain ATCC BAA-8 / DSM 12333 / CCUG 43141 / JCM 11478 / NBRC 16432 / NCIMB 13614 / HKI 0122).